The sequence spans 346 residues: S-adenosylmethionine:tRNA ribosyltransferase-isomerase (346 aa).

It belongs to the QueA family. As to quaternary structure, monomer.

It localises to the cytoplasm. It carries out the reaction 7-aminomethyl-7-carbaguanosine(34) in tRNA + S-adenosyl-L-methionine = epoxyqueuosine(34) in tRNA + adenine + L-methionine + 2 H(+). It participates in tRNA modification; tRNA-queuosine biosynthesis. In terms of biological role, transfers and isomerizes the ribose moiety from AdoMet to the 7-aminomethyl group of 7-deazaguanine (preQ1-tRNA) to give epoxyqueuosine (oQ-tRNA). The chain is S-adenosylmethionine:tRNA ribosyltransferase-isomerase from Neisseria gonorrhoeae (strain ATCC 700825 / FA 1090).